Reading from the N-terminus, the 544-residue chain is Glutamyl-tRNA(Gln) amidotransferase subunit B, chloroplastic/mitochondrial (544 aa).

This sequence belongs to the GatB/GatE family. GatB subfamily. Subunit of the heterotrimeric GatCAB amidotransferase (AdT) complex, composed of A, B and C subunits.

It localises to the mitochondrion. It is found in the plastid. The protein resides in the chloroplast. The enzyme catalyses L-glutamyl-tRNA(Gln) + L-glutamine + ATP + H2O = L-glutaminyl-tRNA(Gln) + L-glutamate + ADP + phosphate + H(+). Allows the formation of correctly charged Gln-tRNA(Gln) through the transamidation of misacylated Glu-tRNA(Gln) in chloroplasts and mitochondria. The reaction takes place in the presence of glutamine and ATP through an activated gamma-phospho-Glu-tRNA(Gln). This Oryza sativa subsp. japonica (Rice) protein is Glutamyl-tRNA(Gln) amidotransferase subunit B, chloroplastic/mitochondrial.